We begin with the raw amino-acid sequence, 322 residues long: NADH oxidoreductase HCR (322 aa).

An FAD-binding FR-type domain is found at 7–107 (QCPWRMQVHH…SDAMGEFTCD (101 aa)). Positions 111–213 (EDKFLLLAAG…APYMDWVEQE (103 aa)) are oxidoreductase. One can recognise a 2Fe-2S ferredoxin-type domain in the interval 237–322 (SGLKFTKLQP…CHPQGDLVLA (86 aa)). The [2Fe-2S] cluster site is built by C273, C278, C281, and C311.

The protein in the N-terminal section; belongs to the FAD-binding oxidoreductase type 6 family. The cofactor is [2Fe-2S] cluster. It depends on FAD as a cofactor.

Its function is as follows. NADH oxidoreductase acting in concert with HCP. This is NADH oxidoreductase HCR (hcr) from Escherichia coli (strain K12).